Reading from the N-terminus, the 108-residue chain is Small ribosomal subunit protein uS10 (108 aa).

Belongs to the universal ribosomal protein uS10 family. As to quaternary structure, part of the 30S ribosomal subunit.

Involved in the binding of tRNA to the ribosomes. The protein is Small ribosomal subunit protein uS10 of Mycoplasma pneumoniae (strain ATCC 29342 / M129 / Subtype 1) (Mycoplasmoides pneumoniae).